Reading from the N-terminus, the 82-residue chain is Omega-conotoxin-like TxO6 (82 aa).

A signal peptide spans 1–22; sequence MKLTCVVIVAVLFLTAWTLVMA. The propeptide occupies 23–50; it reads DDSNNGLANLFSKSRDEMEDPEAAKLEK. 3 disulfides stabilise this stretch: Cys-53–Cys-71, Cys-60–Cys-76, and Cys-70–Cys-81.

The protein belongs to the conotoxin O1 superfamily. As to expression, expressed by the venom duct.

It is found in the secreted. Its function is as follows. Omega-conotoxins act at presynaptic membranes, they bind and block voltage-gated calcium channels (Cav). This is Omega-conotoxin-like TxO6 from Conus textile (Cloth-of-gold cone).